Here is a 153-residue protein sequence, read N- to C-terminus: Endoribonuclease YbeY (153 aa).

3 residues coordinate Zn(2+): H116, H120, and H126.

It belongs to the endoribonuclease YbeY family. It depends on Zn(2+) as a cofactor.

Its subcellular location is the cytoplasm. Its function is as follows. Single strand-specific metallo-endoribonuclease involved in late-stage 70S ribosome quality control and in maturation of the 3' terminus of the 16S rRNA. The protein is Endoribonuclease YbeY of Clavibacter sepedonicus (Clavibacter michiganensis subsp. sepedonicus).